The following is a 351-amino-acid chain: Porphobilinogen deaminase (351 aa).

Cys242 is subject to S-(dipyrrolylmethanemethyl)cysteine. Residues 257–306 (PRHLSKLAYREVLEGNTEALATAAYKSNRTDASTGLTYKLPLEVEFGKVS) enclose the RPE1 insert domain.

The protein belongs to the HMBS family. In terms of assembly, monomer. The cofactor is dipyrromethane.

It carries out the reaction 4 porphobilinogen + H2O = hydroxymethylbilane + 4 NH4(+). It participates in porphyrin-containing compound metabolism; protoporphyrin-IX biosynthesis; coproporphyrinogen-III from 5-aminolevulinate: step 2/4. In terms of biological role, tetrapolymerization of the monopyrrole PBG into the hydroxymethylbilane pre-uroporphyrinogen in several discrete steps. The sequence is that of Porphobilinogen deaminase from Rickettsia conorii (strain ATCC VR-613 / Malish 7).